We begin with the raw amino-acid sequence, 195 residues long: MAREREGGGRGRREDREERDSEFVDKLVHINRVAKVVKGGRRFGFAALVVVGDQKGRVGFGHGKAREVPEAIRKATEAAKRGLIRVSLREGRTLHHDVNGRHGAGKVILRAAPQGTGIIAGGPMRAVFETLGMQDVVAKSLGSSNPYNLVRATFEALKNEDSPRSVAARRGIKVSTLQSRRRDADPADQSEAAVA.

A disordered region spans residues Met1 to Asp20. The region spanning Phe23 to Val86 is the S5 DRBM domain. Residues Asp161–Ala195 form a disordered region.

It belongs to the universal ribosomal protein uS5 family. Part of the 30S ribosomal subunit. Contacts proteins S4 and S8.

Functionally, with S4 and S12 plays an important role in translational accuracy. Located at the back of the 30S subunit body where it stabilizes the conformation of the head with respect to the body. The polypeptide is Small ribosomal subunit protein uS5 (Methylobacterium radiotolerans (strain ATCC 27329 / DSM 1819 / JCM 2831 / NBRC 15690 / NCIMB 10815 / 0-1)).